The following is a 419-amino-acid chain: Capsule polysaccharide modification protein LipB (419 aa).

It localises to the cell inner membrane. In terms of biological role, involved in the phospholipid modification of the capsular polysaccharide, a strong requirement for its translocation to the cell surface. This Neisseria meningitidis serogroup A / serotype 4A (strain DSM 15465 / Z2491) protein is Capsule polysaccharide modification protein LipB (lipB).